The sequence spans 393 residues: Large ribosomal subunit protein uL2m (393 aa).

The transit peptide at Met-1–Trp-43 directs the protein to the mitochondrion. The disordered stretch occupies residues Ala-337–Leu-393. A compositionally biased stretch (basic residues) spans Tyr-369 to Met-380. Residues Lys-381–Leu-393 show a composition bias toward basic and acidic residues.

Belongs to the universal ribosomal protein uL2 family. Component of the mitochondrial large ribosomal subunit (mt-LSU). Mature yeast 74S mitochondrial ribosomes consist of a small (37S) and a large (54S) subunit. The 37S small subunit contains a 15S ribosomal RNA (15S mt-rRNA) and 34 different proteins. The 54S large subunit contains a 21S rRNA (21S mt-rRNA) and 46 different proteins. uL2m has a Na/K ligand binding site.

It localises to the mitochondrion. Functionally, component of the mitochondrial ribosome (mitoribosome), a dedicated translation machinery responsible for the synthesis of mitochondrial genome-encoded proteins, including at least some of the essential transmembrane subunits of the mitochondrial respiratory chain. The mitoribosomes are attached to the mitochondrial inner membrane and translation products are cotranslationally integrated into the membrane. This Saccharomyces cerevisiae (strain ATCC 204508 / S288c) (Baker's yeast) protein is Large ribosomal subunit protein uL2m (RML2).